The sequence spans 124 residues: MTERVTYRAKTKFLVASPTKVRPVANVVKCKPYVRAMALLGHLPHKGARLISKVMKSAASNAIDRDKRLDEERLFVRDIQIDEGPRLKRLWCRGRGRGDVQLKRMCHITVVVEESVRTKDGSKG.

It belongs to the universal ribosomal protein uL22 family. As to quaternary structure, part of the 50S ribosomal subunit.

Its function is as follows. This protein binds specifically to 23S rRNA; its binding is stimulated by other ribosomal proteins, e.g. L4, L17, and L20. It is important during the early stages of 50S assembly. It makes multiple contacts with different domains of the 23S rRNA in the assembled 50S subunit and ribosome. Functionally, the globular domain of the protein is located near the polypeptide exit tunnel on the outside of the subunit, while an extended beta-hairpin is found that lines the wall of the exit tunnel in the center of the 70S ribosome. The sequence is that of Large ribosomal subunit protein uL22 from Treponema pallidum (strain Nichols).